The primary structure comprises 64 residues: Small ribosomal subunit protein bS21 (64 aa).

The protein belongs to the bacterial ribosomal protein bS21 family.

This is Small ribosomal subunit protein bS21 from Flavobacterium johnsoniae (strain ATCC 17061 / DSM 2064 / JCM 8514 / BCRC 14874 / CCUG 350202 / NBRC 14942 / NCIMB 11054 / UW101) (Cytophaga johnsonae).